Consider the following 64-residue polypeptide: Beta-defensin 1 (64 aa).

Positions 1–22 (MRLHHLLLVLFFVVLSAGSGFT) are cleaved as a signal peptide. 3 disulfides stabilise this stretch: Cys31–Cys60, Cys38–Cys53, and Cys43–Cys61.

It belongs to the beta-defensin family. As to quaternary structure, monomer. Homodimer.

It localises to the secreted. Its subcellular location is the membrane. In terms of biological role, has bactericidal activity. May act as a ligand for C-C chemokine receptor CCR6. Positively regulates the sperm motility and bactericidal activity in a CCR6-dependent manner. Binds to CCR6 and triggers Ca2+ mobilization in the sperm which is important for its motility. The protein is Beta-defensin 1 (DEFB1) of Ovis aries (Sheep).